The following is a 433-amino-acid chain: Glutamate-1-semialdehyde 2,1-aminomutase (433 aa).

Lys273 is subject to N6-(pyridoxal phosphate)lysine.

It belongs to the class-III pyridoxal-phosphate-dependent aminotransferase family. HemL subfamily. In terms of assembly, homodimer. Pyridoxal 5'-phosphate serves as cofactor.

It is found in the cytoplasm. The catalysed reaction is (S)-4-amino-5-oxopentanoate = 5-aminolevulinate. It functions in the pathway porphyrin-containing compound metabolism; protoporphyrin-IX biosynthesis; 5-aminolevulinate from L-glutamyl-tRNA(Glu): step 2/2. This is Glutamate-1-semialdehyde 2,1-aminomutase from Ralstonia pickettii (strain 12J).